A 593-amino-acid polypeptide reads, in one-letter code: NADH-quinone oxidoreductase subunit C/D (593 aa).

An NADH dehydrogenase I subunit C region spans residues Met1–Gln184. The tract at residues Asp208–Arg593 is NADH dehydrogenase I subunit D.

This sequence in the N-terminal section; belongs to the complex I 30 kDa subunit family. The protein in the C-terminal section; belongs to the complex I 49 kDa subunit family. NDH-1 is composed of 13 different subunits. Subunits NuoB, CD, E, F, and G constitute the peripheral sector of the complex.

It localises to the cell inner membrane. The catalysed reaction is a quinone + NADH + 5 H(+)(in) = a quinol + NAD(+) + 4 H(+)(out). Its function is as follows. NDH-1 shuttles electrons from NADH, via FMN and iron-sulfur (Fe-S) centers, to quinones in the respiratory chain. The immediate electron acceptor for the enzyme in this species is believed to be ubiquinone. Couples the redox reaction to proton translocation (for every two electrons transferred, four hydrogen ions are translocated across the cytoplasmic membrane), and thus conserves the redox energy in a proton gradient. The sequence is that of NADH-quinone oxidoreductase subunit C/D from Pseudomonas savastanoi pv. phaseolicola (strain 1448A / Race 6) (Pseudomonas syringae pv. phaseolicola (strain 1448A / Race 6)).